A 162-amino-acid chain; its full sequence is Caveolin-2 (162 aa).

The Cytoplasmic portion of the chain corresponds to 1 to 86; the sequence is MGLETEKADV…FEISKYVMYK (86 aa). Y19 is modified (phosphotyrosine; by SRC). 2 positions are modified to phosphoserine: S20 and S23. The residue at position 27 (Y27) is a Phosphotyrosine; by SRC. S36 is subject to Phosphoserine. The helical intramembrane region spans 87–107; the sequence is FLTVFLAIPLAFIAGILFATL. Over 108-162 the chain is Cytoplasmic; it reads SCLHIWILMPFVKTCLMVLPSVQTIWKSVTDVIIAPLCTSVGRCFSSVSLQLSQD.

Belongs to the caveolin family. In terms of assembly, monomer or homodimer. Interacts with CAV1; the interaction forms a stable heterooligomeric complex that is required for targeting to lipid rafts and for caveolae formation. Tyrosine phosphorylated forms do not form heterooligomers with the Tyr-19-phosphorylated form existing as a monomer or dimer, and the Tyr-27-form as a monomer only. Interacts (tyrosine phosphorylated form) with the SH2 domain-containing proteins, RASA1, NCK1 and SRC. Interacts (tyrosine phosphorylated form) with INSR, the interaction (Tyr-27-phosphorylated form) is increased on insulin stimulation. Interacts (Tyr-19 phosphorylated form) with MAPK1 (phosphorylated form); the interaction, promoted by insulin, leads to nuclear location and MAPK1 activation. Interacts with STAT3; the interaction is increased on insulin-induced tyrosine phosphorylation leading to STAT activation. Post-translationally, phosphorylated on serine and tyrosine residues. CAV1 promotes phosphorylation on Ser-23 which then targets the complex to the plasma membrane, lipid rafts and caveolae. Phosphorylation on Ser-36 appears to modulate mitosis in endothelial cells. Phosphorylation on both Tyr-19 and Tyr-27 is required for insulin-induced 'Ser-727' phosphorylation of STAT3 and its activation. Phosphorylation on Tyr-19 is required for insulin-induced phosphorylation of MAPK1 and DNA binding of STAT3. Tyrosine phosphorylation is induced by both EGF and insulin (By. similarity).

It is found in the nucleus. Its subcellular location is the cytoplasm. It localises to the golgi apparatus membrane. The protein localises to the cell membrane. The protein resides in the membrane. It is found in the caveola. May act as a scaffolding protein within caveolar membranes. Interacts directly with G-protein alpha subunits and can functionally regulate their activity. Acts as an accessory protein in conjunction with CAV1 in targeting to lipid rafts and driving caveolae formation. The Ser-36 phosphorylated form has a role in modulating mitosis in endothelial cells. Positive regulator of cellular mitogenesis of the MAPK signaling pathway. Required for the insulin-stimulated nuclear translocation and activation of MAPK1 and STAT3, and the subsequent regulation of cell cycle progression. The protein is Caveolin-2 (CAV2) of Pan troglodytes (Chimpanzee).